Reading from the N-terminus, the 93-residue chain is Small ribosomal subunit protein mS33 (93 aa).

Belongs to the mitochondrion-specific ribosomal protein mS33 family. In terms of assembly, component of the mitochondrial small ribosomal subunit (mt-SSU). Mature yeast 74S mitochondrial ribosomes consist of a small (37S) and a large (54S) subunit. The 37S small subunit contains a 15S ribosomal RNA (15S mt-rRNA) and at least 32 different proteins. The 54S large subunit contains a 21S rRNA (21S mt-rRNA) and at least 45 different proteins.

The protein resides in the mitochondrion. In terms of biological role, component of the mitochondrial ribosome (mitoribosome), a dedicated translation machinery responsible for the synthesis of mitochondrial genome-encoded proteins, including at least some of the essential transmembrane subunits of the mitochondrial respiratory chain. The mitoribosomes are attached to the mitochondrial inner membrane and translation products are cotranslationally integrated into the membrane. This is Small ribosomal subunit protein mS33 (rsm27) from Schizosaccharomyces pombe (strain 972 / ATCC 24843) (Fission yeast).